Consider the following 251-residue polypeptide: MAQVDLNCDMGESFGIYQMGTDTQIMPLVSSANIACGFHAGDPSVMRKTLEAAVAQGVALGAHPGLPDLVGFGRRNMQVSAQEAYDMVVYQVGALAGFAKAAGVSLHHVKPHGALYNMAAKDKALADAIARAVRDIDASLVLYGLAGSQLIQAGKNAGLRVASEVFADRTYQADGSLTSRSQPNALLQSDEEAVQQVLTMVTEKRVKAVTGEWVSLDADTICIHGDGAHALSFATKVRAALLQAGVEIKAM.

It belongs to the LamB/PxpA family. Forms a complex composed of PxpA, PxpB and PxpC.

The catalysed reaction is 5-oxo-L-proline + ATP + 2 H2O = L-glutamate + ADP + phosphate + H(+). Catalyzes the cleavage of 5-oxoproline to form L-glutamate coupled to the hydrolysis of ATP to ADP and inorganic phosphate. In Tolumonas auensis (strain DSM 9187 / NBRC 110442 / TA 4), this protein is 5-oxoprolinase subunit A.